A 138-amino-acid polypeptide reads, in one-letter code: uncharacterized protein (138 aa).

A run of 3 helical transmembrane segments spans residues 17–37 (LIVSTIYIVLFFAILNLTVFF), 43–63 (INLILKNSCVVSFVVVWLLVC), and 117–137 (FWWMNFSLYLLGSLISIVVSL).

The protein resides in the cell membrane. This is an uncharacterized protein from Mycoplasma pneumoniae (strain ATCC 29342 / M129 / Subtype 1) (Mycoplasmoides pneumoniae).